A 60-amino-acid polypeptide reads, in one-letter code: MSKLKITLKKSKIGRIEKHIRTCEALGLHKIGQSVIKEDNDAIRGMIRHIAFMVDVEEVK.

The protein belongs to the universal ribosomal protein uL30 family. Part of the 50S ribosomal subunit.

This is Large ribosomal subunit protein uL30 from Finegoldia magna (strain ATCC 29328 / DSM 20472 / WAL 2508) (Peptostreptococcus magnus).